The following is a 347-amino-acid chain: Selenide, water dikinase (347 aa).

The active site involves Cys-17. Residues Lys-20 and 48-50 (TRD) each bind ATP. Residue Asp-51 participates in Mg(2+) binding. ATP is bound by residues Asp-68, Asp-91, and 139 to 141 (GHS). Mg(2+) is bound at residue Asp-91. Position 227 (Asp-227) interacts with Mg(2+).

The protein belongs to the selenophosphate synthase 1 family. Class I subfamily. As to quaternary structure, homodimer. Mg(2+) is required as a cofactor.

The catalysed reaction is hydrogenselenide + ATP + H2O = selenophosphate + AMP + phosphate + 2 H(+). In terms of biological role, synthesizes selenophosphate from selenide and ATP. This is Selenide, water dikinase from Salmonella typhimurium (strain LT2 / SGSC1412 / ATCC 700720).